A 90-amino-acid chain; its full sequence is Probable Fe(2+)-trafficking protein (90 aa).

It belongs to the Fe(2+)-trafficking protein family.

Functionally, could be a mediator in iron transactions between iron acquisition and iron-requiring processes, such as synthesis and/or repair of Fe-S clusters in biosynthetic enzymes. The protein is Probable Fe(2+)-trafficking protein of Pseudomonas fluorescens (strain Pf0-1).